The chain runs to 127 residues: Glycine cleavage system H protein (127 aa).

Residues 24–105 (AALVGITDFA…YGEGWLVKIR (82 aa)) form the Lipoyl-binding domain. Residue Lys65 is modified to N6-lipoyllysine.

It belongs to the GcvH family. As to quaternary structure, the glycine cleavage system is composed of four proteins: P, T, L and H. The cofactor is (R)-lipoate.

Functionally, the glycine cleavage system catalyzes the degradation of glycine. The H protein shuttles the methylamine group of glycine from the P protein to the T protein. This chain is Glycine cleavage system H protein, found in Chlorobium limicola (strain DSM 245 / NBRC 103803 / 6330).